Here is a 276-residue protein sequence, read N- to C-terminus: Pirin-like protein CC_0481 (276 aa).

This sequence belongs to the pirin family.

The chain is Pirin-like protein CC_0481 from Caulobacter vibrioides (strain ATCC 19089 / CIP 103742 / CB 15) (Caulobacter crescentus).